A 271-amino-acid chain; its full sequence is Fatty acid elongase A (271 aa).

The next 7 helical transmembrane spans lie at 35–55, 68–88, 102–122, 139–159, 165–185, 198–220, and 237–257; these read ILFP…LQIF, AMFH…GIVI, IICK…FYLS, SLLF…WANL, CQWV…FYYF, HITT…WHFY, and TSAF…QFFV.

Belongs to the ELO family.

Its subcellular location is the membrane. It catalyses the reaction a very-long-chain acyl-CoA + malonyl-CoA + H(+) = a very-long-chain 3-oxoacyl-CoA + CO2 + CoA. Fatty acid elongase with strict substrate specificity for monounsaturated fatty acids, in particular 16:1 (delta-9) to produce the unusual 18:1 (delta-11) fatty acid. In Dictyostelium discoideum (Social amoeba), this protein is Fatty acid elongase A (eloA).